A 189-amino-acid chain; its full sequence is Peptidyl-tRNA hydrolase (189 aa).

Tyrosine 15 is a tRNA binding site. Residue histidine 20 is the Proton acceptor of the active site. Residues phenylalanine 66, asparagine 68, and asparagine 114 each contribute to the tRNA site.

This sequence belongs to the PTH family. As to quaternary structure, monomer.

Its subcellular location is the cytoplasm. The enzyme catalyses an N-acyl-L-alpha-aminoacyl-tRNA + H2O = an N-acyl-L-amino acid + a tRNA + H(+). In terms of biological role, hydrolyzes ribosome-free peptidyl-tRNAs (with 1 or more amino acids incorporated), which drop off the ribosome during protein synthesis, or as a result of ribosome stalling. Functionally, catalyzes the release of premature peptidyl moieties from peptidyl-tRNA molecules trapped in stalled 50S ribosomal subunits, and thus maintains levels of free tRNAs and 50S ribosomes. This is Peptidyl-tRNA hydrolase from Streptococcus pyogenes serotype M3 (strain ATCC BAA-595 / MGAS315).